The sequence spans 437 residues: Trigger factor (437 aa).

The PPIase FKBP-type domain occupies 163 to 248 (DDRVTVDFEG…VKKIEASHLP (86 aa)).

Belongs to the FKBP-type PPIase family. Tig subfamily.

The protein resides in the cytoplasm. The enzyme catalyses [protein]-peptidylproline (omega=180) = [protein]-peptidylproline (omega=0). Functionally, involved in protein export. Acts as a chaperone by maintaining the newly synthesized protein in an open conformation. Functions as a peptidyl-prolyl cis-trans isomerase. The protein is Trigger factor of Variovorax paradoxus (strain S110).